Reading from the N-terminus, the 93-residue chain is Stromal cell-derived factor 1 (93 aa).

The first 21 residues, 1 to 21, serve as a signal peptide directing secretion; the sequence is MDAKVVAVLALVLAALCLSDG. A Receptor activation motif motif is present at residues 22 to 23; the sequence is KP. Residues 29 to 33 form a receptor and heparin binding region; the sequence is RCPCR. 2 disulfide bridges follow: C30–C55 and C32–C71. 3 receptor binding regions span residues 39–41, 48–50, and 60–70; these read VAR, KIL, and VARLKNNNRQV. Residues 41-51, R62, Q69, and K85 contribute to the heparin site; that span reads RANVKHLKILN.

Belongs to the intercrine alpha (chemokine CxC) family. As to quaternary structure, monomer or homodimer; in equilibrium. Dimer formation is induced by non acidic pH and the presence of multivalent anions, and by binding to CXCR4 or heparin. Monomeric form is required for full chemotactic activity and resistance to ischemia/reperfusion injury, whereas the dimeric form acts as a partial agonist of CXCR4, stimulating Ca2+ mobilization but with no chemotactic activity and instead acts as a selective antagonist that blocks chemotaxis induced by the monomeric form. Interacts with the N-terminus of ACKR3. Interacts with integrin subunit ITGB3 (via the allosteric site (site 2)). Interacts with TNFAIP6 (via Link domain).

The protein localises to the secreted. Functionally, chemoattractant active on T-lymphocytes and monocytes but not neutrophils. Activates the C-X-C chemokine receptor CXCR4 to induce a rapid and transient rise in the level of intracellular calcium ions and chemotaxis. Also binds to atypical chemokine receptor ACKR3, which activates the beta-arrestin pathway and acts as a scavenger receptor for SDF-1. Acts as a positive regulator of monocyte migration and a negative regulator of monocyte adhesion via the LYN kinase. Binds to the allosteric site (site 2) of integrins and activates integrins ITGAV:ITGB3, ITGA4:ITGB1 and ITGA5:ITGB1 in a CXCR4-independent manner. Stimulates migration of monocytes and T-lymphocytes through its receptors, CXCR4 and ACKR3, and decreases monocyte adherence to surfaces coated with ICAM-1, a ligand for beta-2 integrins. SDF1A/CXCR4 signaling axis inhibits beta-2 integrin LFA-1 mediated adhesion of monocytes to ICAM-1 through LYN kinase. Plays a protective role after myocardial infarction. Has several critical functions during embryonic development; required for B-cell lymphopoiesis, myelopoiesis in bone marrow and heart ventricular septum formation. Stimulates the proliferation of bone marrow-derived B-cell progenitors in the presence of IL7 as well as growth of stromal cell-dependent pre-B-cells. This is Stromal cell-derived factor 1 (CXCL12) from Felis catus (Cat).